The chain runs to 715 residues: MSAALPAEPFRVSGGVNKVRFRSDTGFTVMSATLRNEQGEDPDATVIGVMPPLDVGDTFSAEVLMEEHREYGYQYRVVNMVLEAMPADLSEEGVAAYFEARVGGVGKVLAGRIAKTFGAAAFDLLEDDPQKFLQVPGITESTLHKMVSSWSQQGLERRLLAGLQGLGLTINQAQRAVKHFGADALDRLEKDLFTLTEVEGIGFLTADKLWQARGGALDDPRRLTAAAVYALQLAGTQAGHSFLPRSRAEKGVVHYTRVTPGQARLAVETAVELGRLSEDDSPLFAAEAAATGEGRIYLPHVLRAEKKLASLIRTLLATPPADGAGNDDWAVPKKARKGLSEEQASVLDQLAGHRLVVLTGGPGTGKSTTTKAVADLAESLGLEVGLCAPTGKAARRLGEVTGRTASTVHRLLGYGPQGFRHNHLEPAPYDLLIVDEVSMMGDALMLSLLAAVPPGARVLLVGDTDQLPPVDAGLPLLALAQAAPTIKLTQVYRQAAKNPIIQAAHGLLHGEAPAWGDKRLNLTEIEPDGGARRVALMVRELGGPGAVQVLTPMRKGPLGMDHLNYHLQALFNPGEGGVRIAEGEARPGDTVVQTKNDYNNEIFNGTLGMVLKAEGARLTVDFDGNVVELTGAELFNLQLGYALTVHRAQGSEWGTVLGVLHEAHMPMLSRNLVYTALTRARDRFFSAGSASAWQIAAARQREARNTALLERIRAH.

Residues 1 to 150 (MSAALPAEPF…STLHKMVSSW (150 aa)) form a not required for helicase activity region. Residues Gln343 and 363–367 (GTGKS) contribute to the ATP site. DNA-binding regions lie at residues Gly391 and 407 to 414 (TVHRLLGY). Residue Gln466 participates in ATP binding. A DNA-binding region is located at residue Val470. Arg493 contacts ATP. 3 DNA-binding regions span residues 554–555 (RK), 596–604 (NDYNNEIFN), and 644–647 (TVHR). ATP is bound at residue Arg679.

It belongs to the RecD family. RecD2 subfamily. As to quaternary structure, monomer; homodimers seem to be inactive.

The catalysed reaction is Couples ATP hydrolysis with the unwinding of duplex DNA at the replication fork by translocating in the 5'-3' direction. This creates two antiparallel DNA single strands (ssDNA). The leading ssDNA polymer is the template for DNA polymerase III holoenzyme which synthesizes a continuous strand.. It catalyses the reaction ATP + H2O = ADP + phosphate + H(+). In terms of biological role, DNA-dependent ATPase (ssDNA stimulates the ATPase better than dsDNA) and ATP-dependent 5'-3' DNA helicase. Plays a role in an antioxidant pathway. Involved in DNA damage repair and/or recombination. Appears to move along DNA in single base steps, powered by hydrolysis of 1 molecule of ATP. Has low processivity, unwinds about 15-20 base pairs/second. Short (20 bp) substrates with 5'-overhangs or forked ends are the best substrates, is much less efficient on 52 or 76 bp substrates with 5'-overhangs. The presence of single-stranded DNA-binding protein (SSB) increases unwinding 4-5 fold. Has no activity on blunt DNA or DNA with 3'-overhangs. Requires at least 10 bases of 5'-ssDNA for helicase activity. This is ATP-dependent RecD2 DNA helicase from Deinococcus radiodurans (strain ATCC 13939 / DSM 20539 / JCM 16871 / CCUG 27074 / LMG 4051 / NBRC 15346 / NCIMB 9279 / VKM B-1422 / R1).